Here is a 515-residue protein sequence, read N- to C-terminus: Cell division control protein 6 homolog (515 aa).

Residues 1–24 (MPTLRSATASASTAGTASPTAIAT) show a composition bias toward low complexity. The interval 1-70 (MPTLRSATAS…TPKLLSASPR (70 aa)) is disordered. A compositionally biased stretch (polar residues) spans 43 to 52 (DASQFTSPHK).

This sequence belongs to the CDC6/cdc18 family.

The protein localises to the nucleus. In terms of biological role, may be involved in the initiation of DNA replication. The chain is Cell division control protein 6 homolog from Oryza sativa subsp. japonica (Rice).